A 1342-amino-acid chain; its full sequence is DNA-directed RNA polymerase subunit beta (1342 aa).

Belongs to the RNA polymerase beta chain family. As to quaternary structure, the RNAP catalytic core consists of 2 alpha, 1 beta, 1 beta' and 1 omega subunit. When a sigma factor is associated with the core the holoenzyme is formed, which can initiate transcription.

It catalyses the reaction RNA(n) + a ribonucleoside 5'-triphosphate = RNA(n+1) + diphosphate. Functionally, DNA-dependent RNA polymerase catalyzes the transcription of DNA into RNA using the four ribonucleoside triphosphates as substrates. The sequence is that of DNA-directed RNA polymerase subunit beta from Salmonella typhimurium (strain LT2 / SGSC1412 / ATCC 700720).